The chain runs to 375 residues: Succinyl-diaminopimelate desuccinylase (375 aa).

A Zn(2+)-binding site is contributed by H66. The active site involves D68. Position 99 (D99) interacts with Zn(2+). Catalysis depends on E130, which acts as the Proton acceptor. E131, E159, and H345 together coordinate Zn(2+).

Belongs to the peptidase M20A family. DapE subfamily. Homodimer. It depends on Zn(2+) as a cofactor. Co(2+) is required as a cofactor.

The catalysed reaction is N-succinyl-(2S,6S)-2,6-diaminopimelate + H2O = (2S,6S)-2,6-diaminopimelate + succinate. It functions in the pathway amino-acid biosynthesis; L-lysine biosynthesis via DAP pathway; LL-2,6-diaminopimelate from (S)-tetrahydrodipicolinate (succinylase route): step 3/3. Functionally, catalyzes the hydrolysis of N-succinyl-L,L-diaminopimelic acid (SDAP), forming succinate and LL-2,6-diaminopimelate (DAP), an intermediate involved in the bacterial biosynthesis of lysine and meso-diaminopimelic acid, an essential component of bacterial cell walls. The polypeptide is Succinyl-diaminopimelate desuccinylase (Xanthobacter autotrophicus (strain ATCC BAA-1158 / Py2)).